A 556-amino-acid polypeptide reads, in one-letter code: Valencene synthase (556 aa).

The segment covering 1–12 (MSTQVSASSLAQ) has biased composition (polar residues). Residues 1–24 (MSTQVSASSLAQIPQPKNRPVANF) form a disordered region. Mg(2+)-binding residues include Asp310, Asp314, and Glu462. The short motif at 310 to 314 (DDIHD) is the DDXXD motif element.

The protein belongs to the terpene synthase family. Tpsa subfamily. Mg(2+) is required as a cofactor. Expressed in flowers and anthers. Detected inside the pollen grains, but not in stems, leaves, tendrils, roots, seeds, pistils or caps.

It is found in the cytoplasm. It carries out the reaction (2E,6E)-farnesyl diphosphate = (+)-valencene + diphosphate. The enzyme catalyses (2E,6E)-farnesyl diphosphate = (-)-7-epi-alpha-selinene + diphosphate. It participates in secondary metabolite biosynthesis; terpenoid biosynthesis. Involved in the biosynthesis of valencene, a major volatile emitted from flowers of grapevine. Can use farnesyl diphosphate as substrate, but not geranyl diphosphate or geranylgeranyl diphosphate. Produces mainly (+)-valencene and (-)-7-epi-alpha-selinene along with five minor products. In Vitis vinifera (Grape), this protein is Valencene synthase (ValCS).